We begin with the raw amino-acid sequence, 464 residues long: MIDMEVGIVGGGLAGLVAAISLVEKGVDVSIIGPKSKDSNSYLAQAGIAFPLVEGDSIRIHVLDTIRAGKYINDEEVVWNVISKSTEAYSFLVSHGVTFTGNELEGGHSHPRVFTIKSETGKHVIPILEKHARELGVNFVRGFVEEIGIKNGKLAGVFLNGELLKFDAVVVATGGFSGLYRFTAGVKENIGLLIGDLALKGVPLRDMEFVQFHPTGFIGRRTYLITEAVRGAGAKLVTGDGERFVNELETRDVVARAIYLKMLEGKGVFLDARGIEDFKDRFPYVYSVLKKEGIDPGKDLIPVTPVAHYTMGGISVDIFYRTRIRGLYAIGEAASNGFHGANRLASNSLLECVVSGLEVARTILREEPKRGANDAPYNFDELGDVDSIREIMWNHAGIVRDKSSLLEGLKKLEGVEADQRLKVVAKAVLTLALEREESRGSHYRRDFPFMRKEFERPSFFHLNV.

FAD is bound by residues 11–14 (GGLA) and 40–47 (NSYLAQAG). Arg251 (proton donor/acceptor) is an active-site residue. FAD contacts are provided by residues Glu332 and 348–349 (SL).

Belongs to the FAD-dependent oxidoreductase 2 family. NadB subfamily. FAD is required as a cofactor.

The protein localises to the cytoplasm. It carries out the reaction L-aspartate + O2 = iminosuccinate + H2O2. It functions in the pathway cofactor biosynthesis; NAD(+) biosynthesis; iminoaspartate from L-aspartate (oxidase route): step 1/1. Its function is as follows. Catalyzes the oxidation of L-aspartate to iminoaspartate, the first step in the de novo biosynthesis of NAD(+). The polypeptide is L-aspartate oxidase (nadB) (Pyrococcus abyssi (strain GE5 / Orsay)).